Consider the following 384-residue polypeptide: Ribonucleoside-diphosphate reductase small chain (384 aa).

Residues Asp-130, Glu-161, and His-164 each coordinate Fe cation. Residue Tyr-168 is part of the active site. Residues Glu-224, Glu-258, and His-261 each coordinate Fe cation.

This sequence belongs to the ribonucleoside diphosphate reductase small chain family. As to quaternary structure, heterodimer of a large and a small subunit. Fe cation is required as a cofactor.

The enzyme catalyses a 2'-deoxyribonucleoside 5'-diphosphate + [thioredoxin]-disulfide + H2O = a ribonucleoside 5'-diphosphate + [thioredoxin]-dithiol. Provides the precursors necessary for DNA synthesis. Catalyzes the biosynthesis of deoxyribonucleotides from the corresponding ribonucleotides. This Spisula solidissima (Atlantic surf-clam) protein is Ribonucleoside-diphosphate reductase small chain.